The primary structure comprises 564 residues: Septation ring formation regulator EzrA (564 aa).

At 1–2 (ME) the chain is on the extracellular side. The helical transmembrane segment at 3–21 (FVIGLLALFLILFATGYLF) threads the bilayer. At 22-564 (RKNIYKEIDR…RLEADAKQPE (543 aa)) the chain is on the cytoplasmic side. 3 coiled-coil regions span residues 99–159 (QKSK…AYSH), 243–281 (KGYKLDHIQVEKELENLLKELKRAEDALLDELDLEEAAA), and 310–498 (KVPE…VELV).

It belongs to the EzrA family.

The protein resides in the cell membrane. In terms of biological role, negative regulator of FtsZ ring formation; modulates the frequency and position of FtsZ ring formation. Inhibits FtsZ ring formation at polar sites. Interacts either with FtsZ or with one of its binding partners to promote depolymerization. The protein is Septation ring formation regulator EzrA of Bacillus licheniformis (strain ATCC 14580 / DSM 13 / JCM 2505 / CCUG 7422 / NBRC 12200 / NCIMB 9375 / NCTC 10341 / NRRL NRS-1264 / Gibson 46).